The primary structure comprises 306 residues: D-alanine--D-alanine ligase (306 aa).

The 196-residue stretch at 106–301 (KLLWQSAGIN…FEELVLKILG (196 aa)) folds into the ATP-grasp domain. Residue 132–187 (AKELGLPLIVKPSREGSTIGLSKVREAGEVAAAWHLAARHDAMVLAEQFIEGTELT) coordinates ATP. Positions 255, 268, and 270 each coordinate Mg(2+).

It belongs to the D-alanine--D-alanine ligase family. The cofactor is Mg(2+). Requires Mn(2+) as cofactor.

It is found in the cytoplasm. It carries out the reaction 2 D-alanine + ATP = D-alanyl-D-alanine + ADP + phosphate + H(+). It participates in cell wall biogenesis; peptidoglycan biosynthesis. In terms of biological role, cell wall formation. This Nitrosospira multiformis (strain ATCC 25196 / NCIMB 11849 / C 71) protein is D-alanine--D-alanine ligase.